The chain runs to 737 residues: Polyribonucleotide nucleotidyltransferase (737 aa).

Residues aspartate 489 and aspartate 495 each coordinate Mg(2+). One can recognise a KH domain in the interval 556–615 (PKIDTIKIDVDKIKIVIGKGGETIDKIIAETGVKIDIDEEGNVSIYSSDQDAINRAKEII). One can recognise an S1 motif domain in the interval 625-693 (DEVYRAKVVR…EKGRIDASMK (69 aa)). The segment at 691 to 737 (SMKALLPRPPKPEHDEKGEKSERPHRPRHHKDHKPKKEFTETPKDSE) is disordered. Over residues 700 to 714 (PKPEHDEKGEKSERP) the composition is skewed to basic and acidic residues. A compositionally biased stretch (basic residues) spans 715-724 (HRPRHHKDHK). Basic and acidic residues predominate over residues 725 to 737 (PKKEFTETPKDSE).

It belongs to the polyribonucleotide nucleotidyltransferase family. Mg(2+) is required as a cofactor.

It is found in the cytoplasm. It carries out the reaction RNA(n+1) + phosphate = RNA(n) + a ribonucleoside 5'-diphosphate. Functionally, involved in mRNA degradation. Catalyzes the phosphorolysis of single-stranded polyribonucleotides processively in the 3'- to 5'-direction. This chain is Polyribonucleotide nucleotidyltransferase, found in Streptococcus pneumoniae (strain ATCC 700669 / Spain 23F-1).